The chain runs to 185 residues: MSDLLVVPDAERVAATVVAGFRDVVDFPQPGVVFKDITPLLADARAFATVVEALAALARASGASAVAGIEARGFMLAAPAAERAGLGFWPVRKAGKLPAPVLRREYALEYGTAALELSAGTVGAGERVLVVDDVLATGGTARAACELLEEAGAQVVALAVLLELAPLGGRPRLGDRPVVALHTQT.

Belongs to the purine/pyrimidine phosphoribosyltransferase family. As to quaternary structure, homodimer.

The protein localises to the cytoplasm. The enzyme catalyses AMP + diphosphate = 5-phospho-alpha-D-ribose 1-diphosphate + adenine. Its pathway is purine metabolism; AMP biosynthesis via salvage pathway; AMP from adenine: step 1/1. Functionally, catalyzes a salvage reaction resulting in the formation of AMP, that is energically less costly than de novo synthesis. The sequence is that of Adenine phosphoribosyltransferase from Kineococcus radiotolerans (strain ATCC BAA-149 / DSM 14245 / SRS30216).